The chain runs to 601 residues: Oligoendopeptidase F, plasmid (601 aa).

A Zn(2+)-binding site is contributed by His-387. The active site involves Glu-388. His-391 and His-394 together coordinate Zn(2+).

This sequence belongs to the peptidase M3B family. Zn(2+) serves as cofactor.

In terms of biological role, hydrolyzes peptides containing between 7 and 17 amino acids with a rather wide specificity. The sequence is that of Oligoendopeptidase F, plasmid (pepF1) from Lactococcus lactis subsp. cremoris (Streptococcus cremoris).